We begin with the raw amino-acid sequence, 295 residues long: Small ribosomal subunit protein uS2 (295 aa).

It belongs to the universal ribosomal protein uS2 family.

The polypeptide is Small ribosomal subunit protein uS2 (Rickettsia typhi (strain ATCC VR-144 / Wilmington)).